Consider the following 92-residue polypeptide: Small ribosomal subunit protein uS19c (92 aa).

Belongs to the universal ribosomal protein uS19 family.

It is found in the plastid. The protein resides in the chloroplast. Its function is as follows. Protein S19 forms a complex with S13 that binds strongly to the 16S ribosomal RNA. The sequence is that of Small ribosomal subunit protein uS19c from Illicium oligandrum (Star anise).